We begin with the raw amino-acid sequence, 257 residues long: Ribosomal RNA small subunit methyltransferase J (257 aa).

Residues 107 to 108, 123 to 124, and aspartate 177 each bind S-adenosyl-L-methionine; these read RD and ER.

The protein belongs to the methyltransferase superfamily. RsmJ family.

Its subcellular location is the cytoplasm. The enzyme catalyses guanosine(1516) in 16S rRNA + S-adenosyl-L-methionine = N(2)-methylguanosine(1516) in 16S rRNA + S-adenosyl-L-homocysteine + H(+). In terms of biological role, specifically methylates the guanosine in position 1516 of 16S rRNA. The polypeptide is Ribosomal RNA small subunit methyltransferase J (Haemophilus influenzae (strain 86-028NP)).